The primary structure comprises 102 residues: Large ribosomal subunit protein bL21 (102 aa).

It belongs to the bacterial ribosomal protein bL21 family. In terms of assembly, part of the 50S ribosomal subunit. Contacts protein L20.

In terms of biological role, this protein binds to 23S rRNA in the presence of protein L20. In Geobacter metallireducens (strain ATCC 53774 / DSM 7210 / GS-15), this protein is Large ribosomal subunit protein bL21.